Reading from the N-terminus, the 487-residue chain is Cytochrome P450 720B2 (487 aa).

Residues 14 to 34 form a helical membrane-spanning segment; the sequence is WLVGLLCLVLGFLLLQLYKLV. C436 contributes to the heme binding site.

This sequence belongs to the cytochrome P450 family. Heme is required as a cofactor.

Its subcellular location is the membrane. The chain is Cytochrome P450 720B2 (CYP720B2) from Pinus taeda (Loblolly pine).